The chain runs to 171 residues: Large ribosomal subunit protein uL10 (171 aa).

It belongs to the universal ribosomal protein uL10 family. As to quaternary structure, part of the ribosomal stalk of the 50S ribosomal subunit. The N-terminus interacts with L11 and the large rRNA to form the base of the stalk. The C-terminus forms an elongated spine to which L12 dimers bind in a sequential fashion forming a multimeric L10(L12)X complex.

Its function is as follows. Forms part of the ribosomal stalk, playing a central role in the interaction of the ribosome with GTP-bound translation factors. This Maricaulis maris (strain MCS10) (Caulobacter maris) protein is Large ribosomal subunit protein uL10.